The chain runs to 212 residues: uncharacterized protein (212 aa).

A helical transmembrane segment spans residues Val-186–Val-206.

It localises to the membrane. This is an uncharacterized protein from Mycoplasma genitalium (strain ATCC 33530 / DSM 19775 / NCTC 10195 / G37) (Mycoplasmoides genitalium).